A 194-amino-acid chain; its full sequence is ATP-dependent Clp protease proteolytic subunit (194 aa).

Serine 98 (nucleophile) is an active-site residue. Histidine 123 is an active-site residue.

The protein belongs to the peptidase S14 family. As to quaternary structure, fourteen ClpP subunits assemble into 2 heptameric rings which stack back to back to give a disk-like structure with a central cavity, resembling the structure of eukaryotic proteasomes.

Its subcellular location is the cytoplasm. It carries out the reaction Hydrolysis of proteins to small peptides in the presence of ATP and magnesium. alpha-casein is the usual test substrate. In the absence of ATP, only oligopeptides shorter than five residues are hydrolyzed (such as succinyl-Leu-Tyr-|-NHMec, and Leu-Tyr-Leu-|-Tyr-Trp, in which cleavage of the -Tyr-|-Leu- and -Tyr-|-Trp bonds also occurs).. Cleaves peptides in various proteins in a process that requires ATP hydrolysis. Has a chymotrypsin-like activity. Plays a major role in the degradation of misfolded proteins. The polypeptide is ATP-dependent Clp protease proteolytic subunit (Syntrophus aciditrophicus (strain SB)).